Here is a 378-residue protein sequence, read N- to C-terminus: Erythronate-4-phosphate dehydrogenase (378 aa).

The substrate site is built by serine 45 and threonine 66. NAD(+) contacts are provided by aspartate 146 and threonine 175. Residue arginine 208 is part of the active site. Aspartate 232 contributes to the NAD(+) binding site. Residue glutamate 237 is part of the active site. Histidine 254 (proton donor) is an active-site residue. Glycine 257 is an NAD(+) binding site. Tyrosine 258 lines the substrate pocket.

Belongs to the D-isomer specific 2-hydroxyacid dehydrogenase family. PdxB subfamily. Homodimer.

It localises to the cytoplasm. It carries out the reaction 4-phospho-D-erythronate + NAD(+) = (R)-3-hydroxy-2-oxo-4-phosphooxybutanoate + NADH + H(+). It functions in the pathway cofactor biosynthesis; pyridoxine 5'-phosphate biosynthesis; pyridoxine 5'-phosphate from D-erythrose 4-phosphate: step 2/5. Catalyzes the oxidation of erythronate-4-phosphate to 3-hydroxy-2-oxo-4-phosphonooxybutanoate. The chain is Erythronate-4-phosphate dehydrogenase from Escherichia coli O17:K52:H18 (strain UMN026 / ExPEC).